A 412-amino-acid chain; its full sequence is N-carbamoyl-L-amino-acid amidohydrolase (412 aa).

A divalent metal cation-binding residues include histidine 82, aspartate 93, glutamate 128, and histidine 193. An N-carbamoyl-L-alpha-amino acid is bound by residues glutamine 196, histidine 229, asparagine 278, arginine 291, and glycine 360. Residues serine 212 to proline 330 are involved in dimerization. Histidine 385 is a binding site for a divalent metal cation.

The protein belongs to the peptidase M20 family. Homodimer. It depends on Mn(2+) as a cofactor. Requires Ni(2+) as cofactor. Co(2+) is required as a cofactor. The cofactor is Fe(2+).

The enzyme catalyses an N-carbamoyl-L-alpha-amino acid + H2O + 2 H(+) = an L-alpha-amino acid + NH4(+) + CO2. The catalysed reaction is N-carbamoyl-L-tryptophan + H2O + 2 H(+) = L-tryptophan + NH4(+) + CO2. It catalyses the reaction N-carbamoyl-L-tyrosine + H2O + 2 H(+) = L-tyrosine + NH4(+) + CO2. It carries out the reaction N-carbamoyl-L-phenylalanine + H2O + 2 H(+) = L-phenylalanine + NH4(+) + CO2. Its function is as follows. Catalyzes the hydrolysis of aliphatic N-carbamoyl-L-alpha-amino acids to free L-alpha-amino acids. Is strictly L-specific since it is inactive toward N-carbamoyl-D-alpha-amino acids. Shows a preference for aromatic N-carbamoyl-L-alpha-amino acids, such as N-carbamoyl-L-tryptophan and N-carbamoyl-L-tyrosine and, to a lesser extent, N-carbamoyl-L-phenylalanine and the non-natural amino acid N-carbamoyl-L-thienylalanine. Carbamoyl derivatives of beta-alanine and charged aliphatic amino acids are not accepted as substrates. In Paenarthrobacter aurescens (Arthrobacter aurescens), this protein is N-carbamoyl-L-amino-acid amidohydrolase.